The primary structure comprises 299 residues: MQADLDAFLDHLRNERQVSQHTLDGYRRDLAKVHAHCEREGLDAWSALDAGRLRRLIARLHLQGHSSRSLARLLSALRGFYRYLLREGRCRHDPAAGLSPPKGERRLPRTLDADRTQQLLDGAVEDDFIARRDQAMLELFYSSGLRLSELVGLDLDRLDLAAGLVRVHGKGNKARDLPIGSKAREALRAWLSLRAQARPADGALFVGRTGRRLTPRAVQLRVRQAGVRELGQHLHPHMLRHSFASHLLESSQDLRAVQELLGHADIATTQIYTHLDFQHLAAVYDQAHPRARRRKDDTS.

The 85-residue stretch at 1-85 (MQADLDAFLD…ALRGFYRYLL (85 aa)) folds into the Core-binding (CB) domain. The Tyr recombinase domain occupies 106-285 (RLPRTLDADR…DFQHLAAVYD (180 aa)). Residues arginine 146, lysine 170, histidine 237, arginine 240, and histidine 263 contribute to the active site. The active-site O-(3'-phospho-DNA)-tyrosine intermediate is the tyrosine 272.

It belongs to the 'phage' integrase family. XerC subfamily. Forms a cyclic heterotetrameric complex composed of two molecules of XerC and two molecules of XerD.

The protein resides in the cytoplasm. In terms of biological role, site-specific tyrosine recombinase, which acts by catalyzing the cutting and rejoining of the recombining DNA molecules. The XerC-XerD complex is essential to convert dimers of the bacterial chromosome into monomers to permit their segregation at cell division. It also contributes to the segregational stability of plasmids. This Azotobacter vinelandii (strain DJ / ATCC BAA-1303) protein is Tyrosine recombinase XerC.